Here is a 507-residue protein sequence, read N- to C-terminus: Probable cytochrome P450 6a18 (507 aa).

Cysteine 451 provides a ligand contact to heme.

The protein belongs to the cytochrome P450 family. The cofactor is heme.

The protein localises to the endoplasmic reticulum membrane. The protein resides in the microsome membrane. May be involved in the metabolism of insect hormones and in the breakdown of synthetic insecticides. This chain is Probable cytochrome P450 6a18 (Cyp6a18), found in Drosophila melanogaster (Fruit fly).